We begin with the raw amino-acid sequence, 101 residues long: Protein Tat (101 aa).

The segment at 1–20 (MEVVDPNLDPWKHPGSQPET) is disordered. The interval 1 to 24 (MEVVDPNLDPWKHPGSQPETPCNK) is interaction with human CREBBP. Residues 1-48 (MEVVDPNLDPWKHPGSQPETPCNKCYCKKCCFHCQLCFTRKGLGISYG) form a transactivation region. C22, C25, and C27 together coordinate Zn(2+). Positions 22-37 (CNKCYCKKCCFHCQLC) are cysteine-rich. K28 carries the post-translational modification N6-acetyllysine; by host PCAF. Residues C30, H33, C34, and C37 each contribute to the Zn(2+) site. A core region spans residues 38–48 (FTRKGLGISYG). A disordered region spans residues 47–101 (YGRKKRRQRRRTPQSGEVHQDPVSKQPLSQTRGDPKGPEESKKKVESKTKTDPSD). Over residues 48–58 (GRKKRRQRRRT) the composition is skewed to basic residues. The short motif at 49-57 (RKKRRQRRR) is the Nuclear localization signal, RNA-binding (TAR), and protein transduction element. Residues 49–86 (RKKRRQRRRTPQSGEVHQDPVSKQPLSQTRGDPKGPEE) form an interaction with the host capping enzyme RNGTT region. An N6-acetyllysine; by host EP300 and GCN5L2 mark is found at K50 and K51. Asymmetric dimethylarginine; by host PRMT6 occurs at positions 52 and 53. K71 is covalently cross-linked (Glycyl lysine isopeptide (Lys-Gly) (interchain with G-Cter in ubiquitin)). The Cell attachment site signature appears at 78-80 (RGD). Basic and acidic residues predominate over residues 79–101 (GDPKGPEESKKKVESKTKTDPSD).

Belongs to the lentiviruses Tat family. As to quaternary structure, interacts with host CCNT1. Associates with the P-TEFb complex composed at least of Tat, P-TEFb (CDK9 and CCNT1), TAR RNA, RNA Pol II. Recruits the HATs CREBBP, TAF1/TFIID, EP300, PCAF and GCN5L2. Interacts with host KAT5/Tip60; this interaction targets the latter to degradation. Interacts with the host deacetylase SIRT1. Interacts with host capping enzyme RNGTT; this interaction stimulates RNGTT. Binds to host KDR, and to the host integrins ITGAV/ITGB3 and ITGA5/ITGB1. Interacts with host KPNB1/importin beta-1 without previous binding to KPNA1/importin alpha-1. Interacts with EIF2AK2. Interacts with host nucleosome assembly protein NAP1L1; this interaction may be required for the transport of Tat within the nucleus, since the two proteins interact at the nuclear rim. Interacts with host C1QBP/SF2P32; this interaction involves lysine-acetylated Tat. Interacts with the host chemokine receptors CCR2, CCR3 and CXCR4. Interacts with host DPP4/CD26; this interaction may trigger an anti-proliferative effect. Interacts with host LDLR. Interacts with the host extracellular matrix metalloproteinase MMP1. Interacts with host PRMT6; this interaction mediates Tat's methylation. Interacts with, and is ubiquitinated by MDM2/Hdm2. Interacts with host PSMC3 and HTATIP2. Interacts with STAB1; this interaction may overcome SATB1-mediated repression of IL2 and IL2RA (interleukin) in T cells by binding to the same domain than HDAC1. Interacts (when acetylated) with human CDK13, thereby increasing HIV-1 mRNA splicing and promoting the production of the doubly spliced HIV-1 protein Nef. Interacts with host TBP; this interaction modulates the activity of transcriptional pre-initiation complex. Interacts with host RELA. Interacts with host PLSCR1; this interaction negatively regulates Tat transactivation activity by altering its subcellular distribution. In terms of processing, asymmetrical arginine methylation by host PRMT6 seems to diminish the transactivation capacity of Tat and affects the interaction with host CCNT1. Acetylation by EP300, CREBBP, GCN5L2/GCN5 and PCAF regulates the transactivation activity of Tat. EP300-mediated acetylation of Lys-50 promotes dissociation of Tat from the TAR RNA through the competitive binding to PCAF's bromodomain. In addition, the non-acetylated Tat's N-terminus can also interact with PCAF. PCAF-mediated acetylation of Lys-28 enhances Tat's binding to CCNT1. Lys-50 is deacetylated by SIRT1. Post-translationally, polyubiquitination by host MDM2 does not target Tat to degradation, but activates its transactivation function and fosters interaction with CCNT1 and TAR RNA. In terms of processing, phosphorylated by EIF2AK2 on serine and threonine residues adjacent to the basic region important for TAR RNA binding and function. Phosphorylation of Tat by EIF2AK2 is dependent on the prior activation of EIF2AK2 by dsRNA.

The protein localises to the host nucleus. Its subcellular location is the host nucleolus. It localises to the host cytoplasm. It is found in the secreted. Functionally, transcriptional activator that increases RNA Pol II processivity, thereby increasing the level of full-length viral transcripts. Recognizes a hairpin structure at the 5'-LTR of the nascent viral mRNAs referred to as the transactivation responsive RNA element (TAR) and recruits the cyclin T1-CDK9 complex (P-TEFb complex) that will in turn hyperphosphorylate the RNA polymerase II to allow efficient elongation. The CDK9 component of P-TEFb and other Tat-activated kinases hyperphosphorylate the C-terminus of RNA Pol II that becomes stabilized and much more processive. Other factors such as HTATSF1/Tat-SF1, SUPT5H/SPT5, and HTATIP2 are also important for Tat's function. Besides its effect on RNA Pol II processivity, Tat induces chromatin remodeling of proviral genes by recruiting the histone acetyltransferases (HATs) CREBBP, EP300 and PCAF to the chromatin. This also contributes to the increase in proviral transcription rate, especially when the provirus integrates in transcriptionally silent region of the host genome. To ensure maximal activation of the LTR, Tat mediates nuclear translocation of NF-kappa-B by interacting with host RELA. Through its interaction with host TBP, Tat may also modulate transcription initiation. Tat can reactivate a latently infected cell by penetrating in it and transactivating its LTR promoter. In the cytoplasm, Tat is thought to act as a translational activator of HIV-1 mRNAs. Extracellular circulating Tat can be endocytosed by surrounding uninfected cells via the binding to several surface receptors such as CD26, CXCR4, heparan sulfate proteoglycans (HSPG) or LDLR. Neurons are rarely infected, but they internalize Tat via their LDLR. Through its interaction with nuclear HATs, Tat is potentially able to control the acetylation-dependent cellular gene expression. Modulates the expression of many cellular genes involved in cell survival, proliferation or in coding for cytokines or cytokine receptors. Tat plays a role in T-cell and neurons apoptosis. Tat induced neurotoxicity and apoptosis probably contribute to neuroAIDS. Circulating Tat also acts as a chemokine-like and/or growth factor-like molecule that binds to specific receptors on the surface of the cells, affecting many cellular pathways. In the vascular system, Tat binds to ITGAV/ITGB3 and ITGA5/ITGB1 integrins dimers at the surface of endothelial cells and competes with bFGF for heparin-binding sites, leading to an excess of soluble bFGF. This is Protein Tat from Homo sapiens (Human).